A 920-amino-acid polypeptide reads, in one-letter code: Rho GTPase-activating protein REN1 (920 aa).

Over residues 1–10 the composition is skewed to polar residues; sequence MANKNAESSS. Positions 1 to 64 are disordered; that stretch reads MANKNAESSS…SRGGNTVFKS (64 aa). Low complexity predominate over residues 17 to 31; the sequence is QPNQQQQQQPPIANE. Residues 45 to 64 are compositionally biased toward polar residues; that stretch reads PAQSGNTDSRSRGGNTVFKS. In terms of domain architecture, PH spans 60–167; it reads TVFKSGPLSI…WKAALENALT (108 aa). Residues 213-412 form the Rho-GAP domain; the sequence is LALEDVDGAP…TLLEEYESIF (200 aa). 3 disordered regions span residues 417-592, 719-825, and 837-920; these read LSPG…NLSM, RLGH…ALSK, and RSQI…TFSR. Acidic residues predominate over residues 434 to 463; the sequence is EGSDDEEYDDDDDGSQGSEDYTDEEEDLEN. Polar residues predominate over residues 464–473; the sequence is ESNGSYSESA. 3 stretches are compositionally biased toward basic and acidic residues: residues 475–491, 499–509, and 520–532; these read SEDKYADSIDPDDHKIN, KSPKRSKEPKK, and PRHDDGKKDEDIV. A compositionally biased stretch (polar residues) spans 555–568; the sequence is SSTSDVASDTQKPS. Basic residues predominate over residues 577 to 586; sequence SKRHWGRTPG. A coiled-coil region spans residues 598–728; it reads SVEVDEDNAD…RLGHHDGKAS (131 aa). Basic and acidic residues-rich tracts occupy residues 734-768 and 776-788; these read ASKESRKLPEHNAKMKEKQKDTEAASTHISERSTS and RENETEKQQDSRS. Residues 814-825 are compositionally biased toward low complexity; that stretch reads EGSTTTTSALSK. 2 stretches are compositionally biased toward polar residues: residues 854 to 864 and 872 to 885; these read GQPSPTSGQNR and GSGSNQDPDSSKLQ. The span at 889-903 shows a compositional bias: basic and acidic residues; that stretch reads ILDRGRSENGGDRGR. A compositionally biased stretch (polar residues) spans 910–920; sequence HPNTTPRTFSR.

As to quaternary structure, interacts with ARAC11/ROP1. In terms of tissue distribution, expressed in pollen and pollen tubes.

It is found in the cell membrane. In terms of biological role, acts as a GTPase activator for the Rac-type GTPase by converting it to an inactive GDP-bound state. Maintains the global inactivation of ARAC11/ROP1 at the apex in pollen tubes in order to regulate the polar cell growth. The protein is Rho GTPase-activating protein REN1 (REN1) of Arabidopsis thaliana (Mouse-ear cress).